The sequence spans 281 residues: DegV domain-containing protein CA_C0948 (281 aa).

The DegV domain maps to 4 to 280 (IAIITDTTAD…PGLVGLVLLE (277 aa)). 2 residues coordinate hexadecanoate: Ser-60 and Ser-93.

In terms of biological role, may bind long-chain fatty acids, such as palmitate, and may play a role in lipid transport or fatty acid metabolism. This chain is DegV domain-containing protein CA_C0948, found in Clostridium acetobutylicum (strain ATCC 824 / DSM 792 / JCM 1419 / IAM 19013 / LMG 5710 / NBRC 13948 / NRRL B-527 / VKM B-1787 / 2291 / W).